Reading from the N-terminus, the 511-residue chain is MRSFWLFLLLLLFCISFIKLTEGNEDAKRLYDDLMVNYNRHRRPSTSPNKPLTIKLKLRLSQIIDVHEIDQIMTCSVWLKQTWIDRKLSWDPVNYGGVNVLYVPYEMIWVPDIVLYNNADSNYNITISTKATLHYTGEVTWEPPAIFKSMCQIDVRWFPFDEQQCHLKFGSWTFSENLLSVELNEPSLRYEEEIDEKGIIDNVTVAEDGIDLSDYYPSVEWDIMSRVAKRRAKNYPSCCPQSAYIDVTYYLQLRRKPLFYTVNLVFPCVGISFLTILVFYLPSDSGEKVTLCISILVALTIFFLLLTEIIPATSITLPLIGKYLLFTMVMVTLSVVVTVISLNLHFRTPTTHLMPNWVKKVFLKWLPKLLFMRRPIDDYEEKFDDKKKPKDGKIALSVHAHRVSNVGNNIRNATIDDTIQKMYYSPPVVKAFENICFIAELLKKKDRDDKIDEDWKYVAMVLDRLFLLIFSIACFVGTVIILLRAPTLYDTRQPIDLQYRPANLSANPISF.

The first 16 residues, 1 to 16 (MRSFWLFLLLLLFCIS), serve as a signal peptide directing secretion. Over 17–261 (FIKLTEGNED…QLRRKPLFYT (245 aa)) the chain is Extracellular. Residue N124 is glycosylated (N-linked (GlcNAc...) asparagine). C151 and C165 are disulfide-bonded. N202 carries an N-linked (GlcNAc...) asparagine glycan. Cysteines 238 and 239 form a disulfide. 3 helical membrane passes run 262-282 (VNLV…FYLP), 291-311 (LCIS…EIIP), and 324-344 (LLFT…SLNL). Residues 345 to 464 (HFRTPTTHLM…WKYVAMVLDR (120 aa)) are Cytoplasmic-facing. Residues 465 to 485 (LFLLIFSIACFVGTVIILLRA) form a helical membrane-spanning segment.

This sequence belongs to the ligand-gated ion channel (TC 1.A.9) family. Acetylcholine receptor (TC 1.A.9.1) subfamily. In terms of assembly, component of nicotinic acetylcholine receptor. In muscles, composed of 2 non-alpha subunits lev-1 and unc-29, and 3 alpha subunits unc-38, unc-63 and lev-8. In cholinergic motoneurons, composed of 2 non-alpha subunits acr-2 and acr-3, and 3 alpha subunits unc-38, unc-63 and acr-12.

It is found in the postsynaptic cell membrane. The protein localises to the cell membrane. In terms of biological role, alpha subunit of nicotinic acetylcholine receptor (nAChR). Probably acts in cholinergic motoneurons to regulate presynaptic neurotransmitter release, thereby ensuring normal level of excitation of cholinergic motoneurons during locomotion. Involved in nAChR sensitivity to nicotine. The polypeptide is Acetylcholine receptor subunit alpha-type unc-38 (unc-38) (Caenorhabditis elegans).